The following is a 550-amino-acid chain: Efflux pump DEP3 (550 aa).

A disordered region spans residues 1-33 (MSEQSTLAGPYTEKPGVESQNPTGDGKASFDET). 11 helical membrane passes run 44–64 (AIAYAAMLSTTFLFALDNTIV), 78–98 (LELISWIGTGFALGTMFILLW), 109–129 (WVYIFNILLFEVGSAVCGAAP), 139–159 (VIAGIGGSGMYSGTLTYVSVL), 172–192 (STVVWGVGSVVGPVVGGAFAA), 199–219 (WGFYINLPIGAVFAPAYMILF), 242–262 (AVIFLAGSACLTVALTFGGVV), 268–288 (GTIIALWTVTGVLLVAFIVLL), 319–339 (FLASGIILAMTYYVPLYFQFI), 351–371 (LLPLIMFMVAFSMVNGFLMPK), and 373–393 (GLIPIWYIVGSALTLIGSALM). A glycan (N-linked (GlcNAc...) asparagine) is linked at N399. The next 3 membrane-spanning stretches (helical) occupy residues 410 to 430 (ILVGAGAGCYIVAGFAIVQSL), 439 to 459 (AVGAMTISQDLGMVLFLAICG), and 515 to 535 (SIWAFFMAAAALSFVCSWPLF).

It belongs to the major facilitator superfamily. TCR/Tet family.

The protein resides in the cell membrane. In terms of biological role, efflux pump; part of the gene cluster that mediates the biosynthesis of depudecin, a highly oxidized eleven-carbon linear polyketide that acts as a histone deacetylase (HDAC) inhibitor and makes a small contribution to pathogenesis. Is presumed either to be responsible for exporting depudecin, to provide self-protection, or both. This is Efflux pump DEP3 from Fusarium langsethiae.